The primary structure comprises 275 residues: Subtilisin (275 aa).

Ca(2+) is bound at residue Gln2. The Peptidase S8 domain maps to 5 to 274; sequence PYGISQIKAP…KGLINVQAAA (270 aa). The active-site Charge relay system is Asp32. Asp41 is a Ca(2+) binding site. His64 (charge relay system) is an active-site residue. Residues Leu75, Asn77, Ile79, Val81, Ala169, Tyr171, and Thr174 each contribute to the Ca(2+) site. Catalysis depends on Ser221, which acts as the Charge relay system.

Belongs to the peptidase S8 family. Requires Ca(2+) as cofactor.

The protein localises to the secreted. It catalyses the reaction Hydrolysis of proteins with broad specificity for peptide bonds, and a preference for a large uncharged residue in P1. Hydrolyzes peptide amides.. Subtilisin is an extracellular alkaline serine protease, it catalyzes the hydrolysis of proteins and peptide amides. This chain is Subtilisin (apr), found in Bacillus pumilus (Bacillus mesentericus).